The following is a 196-amino-acid chain: Proteasome subunit beta (196 aa).

Residue Met1 is a propeptide, removed in mature form; by autocatalysis. Thr2 serves as the catalytic Nucleophile.

Belongs to the peptidase T1B family. As to quaternary structure, the 20S proteasome core is composed of 14 alpha and 14 beta subunits that assemble into four stacked heptameric rings, resulting in a barrel-shaped structure. The two inner rings, each composed of seven catalytic beta subunits, are sandwiched by two outer rings, each composed of seven alpha subunits. The catalytic chamber with the active sites is on the inside of the barrel. Has a gated structure, the ends of the cylinder being occluded by the N-termini of the alpha-subunits. Is capped at one or both ends by the proteasome regulatory ATPase, PAN.

The protein resides in the cytoplasm. The enzyme catalyses Cleavage of peptide bonds with very broad specificity.. With respect to regulation, the formation of the proteasomal ATPase PAN-20S proteasome complex, via the docking of the C-termini of PAN into the intersubunit pockets in the alpha-rings, triggers opening of the gate for substrate entry. Interconversion between the open-gate and close-gate conformations leads to a dynamic regulation of the 20S proteasome proteolysis activity. In terms of biological role, component of the proteasome core, a large protease complex with broad specificity involved in protein degradation. The sequence is that of Proteasome subunit beta from Nanoarchaeum equitans (strain Kin4-M).